Here is a 365-residue protein sequence, read N- to C-terminus: Serpentine receptor class epsilon-21 (365 aa).

The next 7 membrane-spanning stretches (helical) occupy residues 49–69 (ILINFLFLLSIFVTFIGVFCI), 82–102 (IIISGMLLWLELVVSRSFVFI), 116–136 (LLFWAALLRYHYMFFGVHTLL), 158–178 (VWIAAILIGANFLISLTYAFL), 189–209 (IFIVCLAVAVVSIILLEIIYF), 250–270 (VVVVGAFIIMLILAECLPIIL), and 292–314 (PLVVVPTVVALMESFRKVFLSYY).

Belongs to the nematode receptor-like protein sre family.

It is found in the membrane. The sequence is that of Serpentine receptor class epsilon-21 (sre-21) from Caenorhabditis elegans.